A 204-amino-acid chain; its full sequence is Inactive ribonuclease-like protein 9 (204 aa).

A signal peptide spans Met-1–Phe-26. 3 cysteine pairs are disulfide-bonded: Cys-97–Cys-152, Cys-115–Cys-167, and Cys-122–Cys-129. N-linked (GlcNAc...) asparagine glycosylation is found at Asn-130 and Asn-142.

Belongs to the pancreatic ribonuclease family.

It is found in the secreted. Functionally, does not exhibit any ribonuclease activity. The protein is Inactive ribonuclease-like protein 9 (RNASE9) of Macaca mulatta (Rhesus macaque).